The chain runs to 674 residues: Carcinine transporter (674 aa).

At 1-53 (MSDIEDNDGDEYDELSELRQRHKPESQPSVDEAFDLDDLLPTIGEFGKYQKLL) the chain is on the cytoplasmic side. Residues 54–74 (VFGICLPACIPCGFCAFNQLF) traverse the membrane as a helical segment. At 75–178 (MADTPDDYWC…DLVCDQDIYP (104 aa)) the chain is on the extracellular side. Residues N122, N141, and N156 are each glycosylated (N-linked (GlcNAc...) asparagine). The helical transmembrane segment at 179-199 (TIGLAALNTGGPVGVYLFGLL) threads the bilayer. The Cytoplasmic segment spans residues 200–206 (NDRGGRR). A helical transmembrane segment spans residues 207–227 (LSYFVCLATLLAGSLMTSLSK). Residues 228-236 (DFWTWAGSR) are Extracellular-facing. A helical membrane pass occupies residues 237–257 (VIVGLTIPAVYQIPFIISLEL). At 258–264 (VGENYRS) the chain is on the cytoplasmic side. A helical membrane pass occupies residues 265–285 (FVTVMTCTFYTSGIMLLSGVT). Residues 286–293 (YLERDWVR) lie on the Extracellular side of the membrane. Residues 294 to 314 (LSYITSLPFYAYFLYMFVMPE) form a helical membrane-spanning segment. At 315 to 385 (SPRWLLMRGR…CRTPNMRLKT (71 aa)) the chain is on the cytoplasmic side. A helical membrane pass occupies residues 386-406 (ILITLSWFANETVYLGLSYYG). The Extracellular portion of the chain corresponds to 407–414 (PALGTNQY). A helical transmembrane segment spans residues 415-435 (VSFFLSAVVELPSYLCCWYFM). Residues 436 to 441 (DTWGRR) lie on the Cytoplasmic side of the membrane. The helical transmembrane segment at 442 to 462 (WPLSLSMILGGVACVITVMLP) threads the bilayer. Over 463–469 (DDAVDET) the chain is Extracellular. Residues 470 to 490 (LVLYLVSKALLSASFLIIYPF) traverse the membrane as a helical segment. At 491 to 500 (AGELYPTQVR) the chain is on the cytoplasmic side. A helical transmembrane segment spans residues 501-521 (GIGIGASSYIGGLGLIGIPFI). Over 522 to 527 (TYLGKD) the chain is Extracellular. Residues 528-548 (NLKLPLVIMGFLSMLGGMTGL) form a helical membrane-spanning segment. At 549-674 (RLPETLHHRL…DGTMQLTHWI (126 aa)) the chain is on the cytoplasmic side. Residues 614–631 (RDSRRVREPAPRIDERTP) show a composition bias toward basic and acidic residues. The segment at 614–647 (RDSRRVREPAPRIDERTPLDTTASGSGRPVHRPS) is disordered.

The protein belongs to the major facilitator (TC 2.A.1) superfamily. Organic cation transporter (TC 2.A.1.19) family. In terms of tissue distribution, expressed in photoreceptor cells.

Its subcellular location is the cell membrane. The protein resides in the cell projection. The protein localises to the axon. Carcinine transporter which is required for recycling of the neurotransmitter histamine in photoreceptor neurons of the compound eye. Following histamine release from photoreceptors and its uptake by glia where it is converted to carcinine, required for the uptake of carcinine from glia into photoreceptor cells where it can be hydrolyzed by tan to form histamine and beta-alanine. In Drosophila melanogaster (Fruit fly), this protein is Carcinine transporter.